Consider the following 356-residue polypeptide: UDP-3-O-acylglucosamine N-acyltransferase (356 aa).

His-242 serves as the catalytic Proton acceptor.

Belongs to the transferase hexapeptide repeat family. LpxD subfamily. In terms of assembly, homotrimer.

It carries out the reaction a UDP-3-O-[(3R)-3-hydroxyacyl]-alpha-D-glucosamine + a (3R)-hydroxyacyl-[ACP] = a UDP-2-N,3-O-bis[(3R)-3-hydroxyacyl]-alpha-D-glucosamine + holo-[ACP] + H(+). It participates in bacterial outer membrane biogenesis; LPS lipid A biosynthesis. Catalyzes the N-acylation of UDP-3-O-acylglucosamine using 3-hydroxyacyl-ACP as the acyl donor. Is involved in the biosynthesis of lipid A, a phosphorylated glycolipid that anchors the lipopolysaccharide to the outer membrane of the cell. This chain is UDP-3-O-acylglucosamine N-acyltransferase, found in Acinetobacter baumannii (strain ACICU).